Reading from the N-terminus, the 346-residue chain is Putative alpha/beta hydrolase R526 (346 aa).

Belongs to the AB hydrolase 3 family.

The protein localises to the virion. The chain is Putative alpha/beta hydrolase R526 from Acanthamoeba polyphaga mimivirus (APMV).